The following is a 34-amino-acid chain: MSDIN-like toxin proprotein 5 (34 aa).

The propeptide occupies 1–10 (MSDINTARLP). A cross-link (cyclopeptide (Tyr-Pro)) is located at residues 11–20 (YVVFMSFIPP). Residues 21–34 (CVNDDIQVVLTRGE) constitute a propeptide that is removed on maturation.

The protein belongs to the MSDIN fungal toxin family. In terms of processing, processed by the macrocyclase-peptidase enzyme POPB to yield a toxic cyclic decapeptide. POPB first removes 10 residues from the N-terminus. Conformational trapping of the remaining peptide forces the enzyme to release this intermediate rather than proceed to macrocyclization. The enzyme rebinds the remaining peptide in a different conformation and catalyzes macrocyclization of the N-terminal 10 residues.

Its function is as follows. Probable toxin that belongs to the MSDIN-like toxin family responsible for a large number of food poisoning cases and deaths. The polypeptide is MSDIN-like toxin proprotein 5 (Amanita bisporigera (Destroying angel)).